The primary structure comprises 172 residues: Ribosome maturation factor RimM (172 aa).

In terms of domain architecture, PRC barrel spans 96 to 168; it reads DGEFYYHEII…RVDVEILEGL (73 aa).

This sequence belongs to the RimM family. In terms of assembly, binds ribosomal protein uS19.

The protein resides in the cytoplasm. An accessory protein needed during the final step in the assembly of 30S ribosomal subunit, possibly for assembly of the head region. Essential for efficient processing of 16S rRNA. May be needed both before and after RbfA during the maturation of 16S rRNA. It has affinity for free ribosomal 30S subunits but not for 70S ribosomes. In Streptococcus pneumoniae serotype 4 (strain ATCC BAA-334 / TIGR4), this protein is Ribosome maturation factor RimM.